A 1088-amino-acid polypeptide reads, in one-letter code: Leucine-rich repeat receptor-like protein kinase PEPR2 (1088 aa).

The N-terminal stretch at 1–26 (MRNLGLLEITLLCSLFVYFRIDSVSS) is a signal peptide. Over 27-739 (LNSDGLALLS…QVKLSTWKIA (713 aa)) the chain is Extracellular. Residues asparagine 55, asparagine 82, and asparagine 122 are each glycosylated (N-linked (GlcNAc...) asparagine). LRR repeat units lie at residues 75–99 (GNVV…IGEL), 100–122 (KSLV…TLGN), 123–146 (CTSL…IFGS), 147–170 (LQNL…SVGG), 172–194 (IELV…LLGN), 195–219 (CSKL…LYLL), 221–243 (NLGE…SSNC), 244–267 (KKLV…IGNC), 269–291 (SLHS…MGML), 292–315 (RKVS…LGNC), 316–339 (SSLE…LSKL), 341–363 (KLQS…IWKI), 365–387 (SLTQ…VTQL), 388–411 (KHLK…LGLN), 412–435 (RSLE…LCHG), 436–459 (QKLR…IRQC), 460–485 (KTLE…SLSL), 487–506 (YVNL…LGSC), 507–529 (KNLL…ELGN), 530–554 (LQSL…LSGC), 556–577 (RLLY…SFRS), 578–602 (WKSL…LAEL), 603–627 (DRLS…GLLK), 629–651 (LRYG…LGAL), 652–676 (INLE…SLKS), and 678–698 (NQVD…LLSN). N-linked (GlcNAc...) asparagine glycans are attached at residues asparagine 149, asparagine 159, asparagine 183, asparagine 194, asparagine 209, asparagine 229, asparagine 266, asparagine 279, and asparagine 314. Asparagine 373 and asparagine 411 each carry an N-linked (GlcNAc...) asparagine glycan. N-linked (GlcNAc...) asparagine glycosylation is found at asparagine 537 and asparagine 568. 2 N-linked (GlcNAc...) asparagine glycosylation sites follow: asparagine 658 and asparagine 698. The helical transmembrane segment at 740-760 (LIAAGSSLSVLALLFALFLVL) threads the bilayer. At 761-1088 (CRCKRGTKTE…FVRSTSGSVH (328 aa)) the chain is on the cytoplasmic side. Phosphothreonine is present on threonine 791. The Protein kinase domain maps to 794-1080 (LDDKYIIGRG…KDLTDLESFV (287 aa)). Residues 800-808 (IGRGAHGVV) and lysine 822 each bind ATP. Phosphotyrosine occurs at positions 868 and 908. Residue aspartate 921 is the Proton acceptor of the active site. 2 positions are modified to phosphotyrosine: tyrosine 962 and tyrosine 969.

Belongs to the protein kinase superfamily. Ser/Thr protein kinase family. As to quaternary structure, interacts with BAK1. Interacts with CLE14.

It is found in the cell membrane. It carries out the reaction L-seryl-[protein] + ATP = O-phospho-L-seryl-[protein] + ADP + H(+). The catalysed reaction is L-threonyl-[protein] + ATP = O-phospho-L-threonyl-[protein] + ADP + H(+). Functionally, acts as a receptor for PEP defense peptides. Unlike typical immune receptors, senses an endogenous elicitor that potentiates PAMP-inducible plant responses. This is Leucine-rich repeat receptor-like protein kinase PEPR2 (PEPR2) from Arabidopsis thaliana (Mouse-ear cress).